A 180-amino-acid polypeptide reads, in one-letter code: Thiol:disulfide interchange protein TxlA homolog (180 aa).

The helical transmembrane segment at 10-26 (LLAVVAIALSAAVYLGF) threads the bilayer. The Thioredoxin domain occupies 34–143 (SLEAQAQRAI…LEQNITALVA (110 aa)). The cysteines at positions 64 and 67 are disulfide-linked.

It belongs to the thioredoxin family.

It localises to the cell membrane. Required for disulfide bond formation in some proteins. Acts by transferring its disulfide bond to other proteins and is reduced in the process. The polypeptide is Thiol:disulfide interchange protein TxlA homolog (txlA) (Synechocystis sp. (strain ATCC 27184 / PCC 6803 / Kazusa)).